The sequence spans 211 residues: Thymidylate kinase (211 aa).

Position 11–18 (11–18) interacts with ATP; that stretch reads GPDGAGKT.

The protein belongs to the thymidylate kinase family.

It carries out the reaction dTMP + ATP = dTDP + ADP. Functionally, phosphorylation of dTMP to form dTDP in both de novo and salvage pathways of dTTP synthesis. The protein is Thymidylate kinase of Streptococcus pyogenes serotype M6 (strain ATCC BAA-946 / MGAS10394).